A 955-amino-acid chain; its full sequence is Anoctamin-4 (955 aa).

Over 1-352 (MEASSSGITN…FGEKIGLYFA (352 aa)) the chain is Cytoplasmic. Residues 73 to 97 (KDDDSLLHPGNLTSTSEDTSRLEAG) are disordered. The chain crosses the membrane as a helical span at residues 353–373 (WLGWYTGMLFPAAFIGLFVFL). Residues 374 to 424 (YGVTTLDHCQVSKEVCQATDIIMCPVCDKYCPFMRLSDSCVYAKVTHLFDN) are Extracellular-facing. A helical transmembrane segment spans residues 425–445 (GATVFFAVFMAVWATVFLEFW). Residues 446-505 (KRRRAVIAYDWDLIDWEEEEEEIRPQFEAKYSKKERMNPISGKPEPYQAFTDKCSRLIVS) are Cytoplasmic-facing. The helical transmembrane segment at 506–526 (ASGIFFMICVVIAAVFGIVIY) threads the bilayer. Over 527–547 (RVVTVSTFAAFKWALIRNNSQ) the chain is Extracellular. Asparagine 544 is a glycosylation site (N-linked (GlcNAc...) asparagine). A helical transmembrane segment spans residues 548–568 (VATTGTAVCINFCIIMLLNVL). The Cytoplasmic portion of the chain corresponds to 569–595 (YEKVALLLTNLEQPRTESEWENSFTLK). Residues 596-616 (MFLFQFVNLNSSTFYIAFFLG) form a helical membrane-spanning segment. Residues 617-715 (RFTGHPGAYL…AYGLFDEYLE (99 aa)) lie on the Extracellular side of the membrane. Residues 716–736 (MILQFGFTTIFVAAFPLAPLL) form a helical membrane-spanning segment. Residues 737–768 (ALLNNIIEIRLDAYKFVTQWRRPLASRAKDIG) are Cytoplasmic-facing. The chain crosses the membrane as a helical span at residues 769 to 789 (IWYGILEGIGILSVITNAFVI). At 790-885 (AITSDFIPRL…QFWHVLAARL (96 aa)) the chain is on the extracellular side. Residues asparagine 824 and asparagine 837 are each glycosylated (N-linked (GlcNAc...) asparagine). The chain crosses the membrane as a helical span at residues 886 to 906 (AFIIVFEHLVFCIKHLISYLI). The Cytoplasmic portion of the chain corresponds to 907-955 (PDLPKDLRDRMRREKYLIQEMMYEAELERLQKERKERKKNGKAHHNEWP).

The protein belongs to the anoctamin family. As to expression, predominantly expressed in neuronal tissues. Expressed at low levels in ovary, uterus, heart and brain.

Its subcellular location is the cell membrane. The catalysed reaction is a 1,2-diacyl-sn-glycero-3-phospho-L-serine(in) = a 1,2-diacyl-sn-glycero-3-phospho-L-serine(out). It carries out the reaction a beta-D-galactosyl-(1&lt;-&gt;1')-N-acylsphing-4-enine(out) = a beta-D-galactosyl-(1&lt;-&gt;1')-N-acylsphing-4-enine(in). The enzyme catalyses a 1,2-diacyl-sn-glycero-3-phosphocholine(in) = a 1,2-diacyl-sn-glycero-3-phosphocholine(out). In terms of biological role, has calcium-dependent phospholipid scramblase activity; scrambles phosphatidylserine, phosphatidylcholine and galactosylceramide. Does not exhibit calcium-activated chloride channel (CaCC) activity. The chain is Anoctamin-4 from Mus musculus (Mouse).